Consider the following 162-residue polypeptide: Probable chemoreceptor glutamine deamidase CheD 2 (162 aa).

The protein belongs to the CheD family.

The enzyme catalyses L-glutaminyl-[protein] + H2O = L-glutamyl-[protein] + NH4(+). In terms of biological role, probably deamidates glutamine residues to glutamate on methyl-accepting chemotaxis receptors (MCPs), playing an important role in chemotaxis. The protein is Probable chemoreceptor glutamine deamidase CheD 2 of Geobacter metallireducens (strain ATCC 53774 / DSM 7210 / GS-15).